We begin with the raw amino-acid sequence, 431 residues long: MANVVVVGAQWGDEGKGKIVDWLSIEADIVVRFQGGHNAGHTLVIGNQVYKLALLPSGIVRLGKLSVIGNGVVVDPQHLVEEIAKLAAQGIEITPDNLKIAENVPLILGLHRELDAHRESSTVEGVKIGTTKRGIGPAYEDKVGRRAIRLMDLAEPDTLDEKIVRLLAHHEPLRRGLGLEPISAGAIRAELESLAPKILPFMDATWDLLENARRAGKRILFEGAQGALLDIDHGTYPFVTSSNTVAANAATGSGLGPKAIGYVLGIAKAYTTRVGGGPFPTELLDETGQLIGDRGHEYGVNTGRRRRCGWFDAVLVRQTVKTCGIDGIALTKLDILDGFKEIKVCVGYDLDGRRIDRLPASQSAQARVKPIYETIDGWEGTTAGARSWADLPAQAIKYVRRIEELIEAPVALLSTSPERADTILVHDPFRD.

GTP is bound by residues 12–18 and 40–42; these read GDEGKGK and GHT. Asp-13 functions as the Proton acceptor in the catalytic mechanism. Mg(2+) is bound by residues Asp-13 and Gly-40. IMP is bound by residues 13–16, 38–41, Thr-131, Arg-145, Gln-225, Thr-240, and Arg-304; these read DEGK and NAGH. The active-site Proton donor is the His-41. 300–306 contributes to the substrate binding site; sequence VNTGRRR. GTP-binding positions include Arg-306, 332 to 334, and 414 to 416; these read KLD and STS.

Belongs to the adenylosuccinate synthetase family. Homodimer. It depends on Mg(2+) as a cofactor.

It localises to the cytoplasm. The catalysed reaction is IMP + L-aspartate + GTP = N(6)-(1,2-dicarboxyethyl)-AMP + GDP + phosphate + 2 H(+). It functions in the pathway purine metabolism; AMP biosynthesis via de novo pathway; AMP from IMP: step 1/2. Functionally, plays an important role in the de novo pathway of purine nucleotide biosynthesis. Catalyzes the first committed step in the biosynthesis of AMP from IMP. The sequence is that of Adenylosuccinate synthetase from Beijerinckia indica subsp. indica (strain ATCC 9039 / DSM 1715 / NCIMB 8712).